A 172-amino-acid polypeptide reads, in one-letter code: CYLSEDHMLGARENLRLLARMNRLSPHPCLQDRKDFGLPQEMVEGNQLQKDQAISVLHEMLQQCFNLFYTEHSSAAWNTTLLEQLCTGLQQQLEDLDACLGQVMEEKDSDMGRMGPILTVKKYFQGIHVYLKEKEYSDCAWEIIRMEMMRALSSSTTLQKRLRKMGGDLNSL.

2 disulfides stabilise this stretch: C1/C99 and C29/C139. N78 carries an N-linked (GlcNAc...) asparagine glycan.

It belongs to the alpha/beta interferon family. IFN-alphaII subfamily. In terms of tissue distribution, constitutively and exclusively expressed in the mononuclear cells of the extraembryonic trophectoderm.

The protein resides in the secreted. In terms of biological role, paracrine hormone primarily responsible for maternal recognition of pregnancy. Interacts with endometrial receptors, probably type I interferon receptors, and blocks estrogen receptor expression, preventing the estrogen-induced increase in oxytocin receptor expression in the endometrium. This results in the suppression of the pulsatile endometrial release of the luteolytic hormone prostaglandin F2-alpha, hindering the regression of the corpus luteum (luteolysis) and therefore a return to ovarian cyclicity. This, and a possible direct effect of IFN-tau on prostaglandin synthesis, leads in turn to continued ovarian progesterone secretion, which stimulates the secretion by the endometrium of the nutrients required for the growth of the conceptus. In summary, displays particularly high antiviral and antiproliferative potency concurrently with particular weak cytotoxicity, high antiluteolytic activity and immunomodulatory properties. In contrast with other IFNs, IFN-tau is not virally inducible. This is Interferon tau-2 (IFNT2) from Bos taurus (Bovine).